The primary structure comprises 914 residues: Coatomer subunit beta' (914 aa).

WD repeat units lie at residues 13–54 (SRSD…KDFE), 55–94 (VCDVPVRSARFVARKNWILTGSDDMQIRVFNYNTLEKVHS), 97–136 (AHSDYLRCIAVHPTQPLVLTSSDDMLIKLWNWEKMWACQR), 140–180 (GHTH…ANFT), 183–224 (GHEK…CVQT), 227–266 (GHAQNISAVCFHPELPIVLTGSEDGTVRIWHSGTYRLETC), and 352–390 (ACEIYPQTIAHNPNGRFVVVCGDGEYIIYTSMALRNKAF).

It belongs to the WD repeat COPB2 family. Oligomeric complex that consists of at least the alpha, beta, beta', gamma, delta, epsilon and zeta subunits.

It is found in the cytoplasm. The protein resides in the golgi apparatus membrane. Its subcellular location is the cytoplasmic vesicle. It localises to the COPI-coated vesicle membrane. The coatomer is a cytosolic protein complex that binds to dilysine motifs and reversibly associates with Golgi non-clathrin-coated vesicles, which further mediate biosynthetic protein transport from the ER, via the Golgi up to the trans Golgi network. Coatomer complex is required for budding from Golgi membranes, and is essential for the retrograde Golgi-to-ER transport of dilysine-tagged proteins. In Drosophila melanogaster (Fruit fly), this protein is Coatomer subunit beta'.